A 210-amino-acid polypeptide reads, in one-letter code: N-(5'-phosphoribosyl)anthranilate isomerase (210 aa).

The protein belongs to the TrpF family.

The catalysed reaction is N-(5-phospho-beta-D-ribosyl)anthranilate = 1-(2-carboxyphenylamino)-1-deoxy-D-ribulose 5-phosphate. The protein operates within amino-acid biosynthesis; L-tryptophan biosynthesis; L-tryptophan from chorismate: step 3/5. This is N-(5'-phosphoribosyl)anthranilate isomerase from Crocosphaera subtropica (strain ATCC 51142 / BH68) (Cyanothece sp. (strain ATCC 51142)).